The following is a 403-amino-acid chain: Phosphopentomutase (403 aa).

Asp-13, Asp-298, His-303, Asp-339, His-340, and His-351 together coordinate Mn(2+).

The protein belongs to the phosphopentomutase family. Mn(2+) is required as a cofactor.

It localises to the cytoplasm. The enzyme catalyses 2-deoxy-alpha-D-ribose 1-phosphate = 2-deoxy-D-ribose 5-phosphate. It catalyses the reaction alpha-D-ribose 1-phosphate = D-ribose 5-phosphate. It functions in the pathway carbohydrate degradation; 2-deoxy-D-ribose 1-phosphate degradation; D-glyceraldehyde 3-phosphate and acetaldehyde from 2-deoxy-alpha-D-ribose 1-phosphate: step 1/2. Its function is as follows. Isomerase that catalyzes the conversion of deoxy-ribose 1-phosphate (dRib-1-P) and ribose 1-phosphate (Rib-1-P) to deoxy-ribose 5-phosphate (dRib-5-P) and ribose 5-phosphate (Rib-5-P), respectively. This chain is Phosphopentomutase, found in Streptococcus thermophilus (strain ATCC BAA-250 / LMG 18311).